We begin with the raw amino-acid sequence, 864 residues long: Sine oculis-binding protein homolog (864 aa).

A compositionally biased stretch (basic and acidic residues) spans 1–14 (MAEMEKEGRPPENK). A disordered region spans residues 1-25 (MAEMEKEGRPPENKRSRKPAHPVKR). 2 consecutive FCS-type zinc fingers follow at residues 142 to 180 (DEVS…KCFA) and 216 to 256 (FKNN…KCLN). Disordered regions lie at residues 304–360 (LTDA…ETPS), 413–484 (RGPP…PGAP), and 550–616 (KPPN…RGRG). 2 stretches are compositionally biased toward low complexity: residues 314–335 (PVAA…VSPS) and 417–433 (HHAS…MLPG). Pro residues predominate over residues 460 to 484 (IHPPSTPTMPGNPPGLLPPPPPGAP). 2 stretches are compositionally biased toward low complexity: residues 565-582 (SAPG…GRSL) and 590-603 (GSSK…GSSG). The SUMO interaction motif 1 (SIM); mediates the binding to polysumoylated substrates signature appears at 618 to 622 (VVDLT). Serine 627 carries the phosphoserine modification. Residues 648-652 (VIDLT) carry the SUMO interaction motif 2 (SIM); mediates the binding to polysumoylated substrates motif. Lysine 672 participates in a covalent cross-link: Glycyl lysine isopeptide (Lys-Gly) (interchain with G-Cter in SUMO2). At serine 694 the chain carries Phosphoserine. Positions 725–750 (APAEAKGAEPPPEQPPPPAPPKKLLS) are disordered. A compositionally biased stretch (pro residues) spans 733–745 (EPPPEQPPPPAPP).

The protein belongs to the SOBP family. As to quaternary structure, interacts (via SIM domains) with SUMO1 and SUMO2.

In terms of biological role, implicated in development of the cochlea. This is Sine oculis-binding protein homolog from Rattus norvegicus (Rat).